A 348-amino-acid polypeptide reads, in one-letter code: Dihydroorotase (348 aa).

2 residues coordinate Zn(2+): histidine 17 and histidine 19. Substrate is bound by residues 19–21 (HLR) and asparagine 45. Zn(2+)-binding residues include lysine 103, histidine 140, and histidine 178. Position 103 is an N6-carboxylysine (lysine 103). Substrate is bound at residue histidine 140. Leucine 223 serves as a coordination point for substrate. Aspartate 251 provides a ligand contact to Zn(2+). Aspartate 251 is an active-site residue. Substrate contacts are provided by histidine 255 and alanine 267.

This sequence belongs to the metallo-dependent hydrolases superfamily. DHOase family. Class II DHOase subfamily. In terms of assembly, homodimer. Zn(2+) serves as cofactor.

It catalyses the reaction (S)-dihydroorotate + H2O = N-carbamoyl-L-aspartate + H(+). It functions in the pathway pyrimidine metabolism; UMP biosynthesis via de novo pathway; (S)-dihydroorotate from bicarbonate: step 3/3. Catalyzes the reversible cyclization of carbamoyl aspartate to dihydroorotate. This is Dihydroorotase from Escherichia coli O157:H7.